Here is a 299-residue protein sequence, read N- to C-terminus: HTH-type transcriptional regulator PgrR (299 aa).

In terms of domain architecture, HTH lysR-type spans 4–61 (EEIADLMAFVVVAEERSFTRAAARLSMAQSALSQIVRRIEERLGLRLLTRTTRSVVPT). A DNA-binding region (H-T-H motif) is located at residues 21–40 (FTRAAARLSMAQSALSQIVR).

The protein belongs to the LysR transcriptional regulatory family.

Regulates the expression of genes involved in peptidoglycan (PG) degradation. Could play a role in switch control between recycling and degradation of PG peptides. Negatively regulates the expression of the ycjY-ymjD-ymjC-mpaA operon by binding to the PgrR-box. In addition, other genes are predicted to be under the control of PgrR, including genes related to membrane formation and function. The chain is HTH-type transcriptional regulator PgrR (pgrR) from Escherichia coli (strain K12).